Reading from the N-terminus, the 961-residue chain is MGIAQPGELAPVPRFRHLPFTIPNGIGRDTYLKIHNVMNHLGRAVLVGQHRRLIQALSSDLGVDSLVAMVSISMQDSEVCSAFSVYLTTLEQAYHWPRESTLSTPEQLEDHKLVIQMLQQPELRDTLVASVHAQYDHSATPAQVALSALSIAKQMIDQATETRSNKTKLPTEIQDLVNLLYRTSRGDWFIQGNYTDPDSHKEFGRLHEVIRTNGTQRSVQEIFQRFNGISWLQRMPLLHQNFASNSSILCAAYADLQVAMALARDELFSMVIDEPIWGLTFAKFSKGVGLCTIGAGGADCPMFRMMDALCGRADNINQAALLDELDFRSRFFPPGMRALINDLVTAPSVRSHISSGEASYELTQAFRAMEQIRYDLYEMHRKKAMRIALALRAGQQATSSGVQNATTPEKYIASTLSAAIKVRFGQEPARPQVDAFAWSTPLLCSDTGVIQTSRIQFVFSTPLAVSPGDSLRVAVEVEQGDWHIRTYSITHAYARQGSSKARDQICQAVGSAEICVRSKGQVSSFLCNQKTGFPVRVMIKPAPHFRIAGNTSPHEETLFVAQGGAVCVFLAWLAWQKQLVGTYRLVVGARNYNMLAYVGQLEKISSSFGSHLIVHVVLSRPGHGDIQRFVPGNIKASTGRVTHHLGLFSSCSTKATYVCGSASFALDVVRCLSQGPGTKREVPKVSRLQPIVTSRLPHFRLHVAAATENGTDKPCLNQITKLELALHNSPGDLWIALGDRVFDISQVPSFHPGGEKVLMYRAGRQAQDVFDTVHEGCYMISSLLNEMVIGRLDSARGEFSQWEDYLDKIVEIQNDLTNHSRIEQAPTGSIEQLAESPPVEILRGATNCFVKGWSSLLQQSGIGDSGVVSLLSSHQDAISALDAHVRMVYENDFEDPVRYANALRKIFDAHSRLVCGIHTAIDELKRHIVERLVEGDEPELTSLHISTARISQQLRETSKSY.

An FAD-binding site is contributed by Ala-298. One can recognise an FAD-binding FR-type domain in the interval 429-548 (ARPQVDAFAW…IKPAPHFRIA (120 aa)). NADP(+)-binding positions include 453–456 (SRIQ), 499–500 (SK), and Gly-753. Residues 716 to 793 (LNQITKLELA…LNEMVIGRLD (78 aa)) form the Cytochrome b5 heme-binding domain. 753 to 755 (GGE) is an FAD binding site.

It belongs to the flavoprotein pyridine nucleotide cytochrome reductase family. It depends on FAD as a cofactor.

It participates in secondary metabolite biosynthesis. Functionally, cytochrome b5-like reductase; part of the gene cluster that mediates the biosynthesis of the cyclic tetrapeptide apicidin F (APF). The non-ribosomal peptide synthetase apf1 incorporates four different amino acids to produce apicidin F: L-phenylalanine, D-pipecolic acid (D-pip), N-methoxy-L-tryptophan and L-2-aminooctanedioic acid. L-Phenylalanine is the only proteinogenic amino acid directly used by apf1. The 3 other apf1 substrates are non-proteinogenic and have to be modified by other enzymes of the cluster. Lysine is converted to delta-1-pyrroline-5-carboxylate (P5C) which is reduced to L-pipecolic acid (L-pip) by apf3. L-pip is epimerized to D-pip, probably by apf1 activity, prior to incorporation. L-Tryptophan is N-oxidyzed by one of the cytochrome P450 monooxygenases (apf7 or apf8), and further methylated at the hydroxy group by the O-methyltransferase apf6 to yield N-methoxy-L-tryptophan. The synthesis of the fourth apf1 substrate is more complex. The fatty acid synthase apf5 is involved in the synthesis of the octanoic acid backbone of L-2-aminooctanedioic acid by fixing one acetyl-CoA unit and three malonyl-CoA units. Then one of the cytochrome P450 monooxygenases (apf7 or apf8) may oxidize this backbone to 2-oxooctanoic acid. The aminotransferase apf4 is predicted to catalyze the exchange of the keto group with an amino group. The next step would be the oxidation of 2-aminooctanoic acid by one of the cytochrome P450 monooxygenases (apf7 or apf8). The last step is the oxidation of 2-amino-8-hydroxyoctanoic acid to 2-aminooctanedioic acid is catalyzed by the FAD-dependent monooxygenase apf9. This Gibberella fujikuroi (strain CBS 195.34 / IMI 58289 / NRRL A-6831) (Bakanae and foot rot disease fungus) protein is Cytochrome b5-like reductase apf12.